Reading from the N-terminus, the 1216-residue chain is ATP-dependent helicase/nuclease subunit A (1216 aa).

The UvrD-like helicase ATP-binding domain maps to 26–488 (QKKTAEQIEA…IILKENFRSS (463 aa)). 47–54 (ASAGSGKT) contacts ATP. Residues 515–802 (KHQLVFANTK…ELMTIHKSKG (288 aa)) enclose the UvrD-like helicase C-terminal domain.

Belongs to the helicase family. AddA subfamily. As to quaternary structure, heterodimer of AddA and AddB/RexB. The cofactor is Mg(2+).

The enzyme catalyses Couples ATP hydrolysis with the unwinding of duplex DNA by translocating in the 3'-5' direction.. The catalysed reaction is ATP + H2O = ADP + phosphate + H(+). The heterodimer acts as both an ATP-dependent DNA helicase and an ATP-dependent, dual-direction single-stranded exonuclease. Recognizes the chi site generating a DNA molecule suitable for the initiation of homologous recombination. The AddA nuclease domain is required for chi fragment generation; this subunit has the helicase and 3' -&gt; 5' nuclease activities. The polypeptide is ATP-dependent helicase/nuclease subunit A (Streptococcus pneumoniae serotype 2 (strain D39 / NCTC 7466)).